The primary structure comprises 202 residues: Urease accessory protein UreG (202 aa).

GTP is bound at residue 10–17 (GPVGSGKT).

It belongs to the SIMIBI class G3E GTPase family. UreG subfamily. In terms of assembly, homodimer. UreD, UreF and UreG form a complex that acts as a GTP-hydrolysis-dependent molecular chaperone, activating the urease apoprotein by helping to assemble the nickel containing metallocenter of UreC. The UreE protein probably delivers the nickel.

Its subcellular location is the cytoplasm. Facilitates the functional incorporation of the urease nickel metallocenter. This process requires GTP hydrolysis, probably effectuated by UreG. The chain is Urease accessory protein UreG from Synechococcus sp. (strain JA-3-3Ab) (Cyanobacteria bacterium Yellowstone A-Prime).